The primary structure comprises 862 residues: DNA gyrase subunit A (862 aa).

One can recognise a Topo IIA-type catalytic domain in the interval 38-501 (LPDARDGLKP…DYDDIDVEDL (464 aa)). Tyrosine 126 serves as the catalytic O-(5'-phospho-DNA)-tyrosine intermediate. Residues 528–534 (QKRGGKG) carry the GyrA-box motif. The segment at 843 to 862 (KEESDDDDIVADDTQEQDME) is disordered. The segment covering 845 to 862 (ESDDDDIVADDTQEQDME) has biased composition (acidic residues).

The protein belongs to the type II topoisomerase GyrA/ParC subunit family. As to quaternary structure, heterotetramer, composed of two GyrA and two GyrB chains. In the heterotetramer, GyrA contains the active site tyrosine that forms a transient covalent intermediate with DNA, while GyrB binds cofactors and catalyzes ATP hydrolysis.

It is found in the cytoplasm. It catalyses the reaction ATP-dependent breakage, passage and rejoining of double-stranded DNA.. In terms of biological role, a type II topoisomerase that negatively supercoils closed circular double-stranded (ds) DNA in an ATP-dependent manner to modulate DNA topology and maintain chromosomes in an underwound state. Negative supercoiling favors strand separation, and DNA replication, transcription, recombination and repair, all of which involve strand separation. Also able to catalyze the interconversion of other topological isomers of dsDNA rings, including catenanes and knotted rings. Type II topoisomerases break and join 2 DNA strands simultaneously in an ATP-dependent manner. This is DNA gyrase subunit A from Campylobacter fetus.